The primary structure comprises 328 residues: Malate dehydrogenase (328 aa).

11 to 17 (GAAGQIG) provides a ligand contact to NAD(+). Residues R92 and R98 each contribute to the substrate site. Residues N105, Q112, and 129-131 (VGN) contribute to the NAD(+) site. The substrate site is built by N131 and R162. H187 serves as the catalytic Proton acceptor.

The protein belongs to the LDH/MDH superfamily. MDH type 2 family.

The catalysed reaction is (S)-malate + NAD(+) = oxaloacetate + NADH + H(+). Functionally, catalyzes the reversible oxidation of malate to oxaloacetate. The polypeptide is Malate dehydrogenase (Coxiella burnetii (strain CbuG_Q212) (Coxiella burnetii (strain Q212))).